Reading from the N-terminus, the 155-residue chain is Ribosomal RNA large subunit methyltransferase H (155 aa).

Residues Leu72, Gly103, and 122-127 contribute to the S-adenosyl-L-methionine site; that span reads LSPLTL.

Belongs to the RNA methyltransferase RlmH family. In terms of assembly, homodimer.

The protein localises to the cytoplasm. The catalysed reaction is pseudouridine(1915) in 23S rRNA + S-adenosyl-L-methionine = N(3)-methylpseudouridine(1915) in 23S rRNA + S-adenosyl-L-homocysteine + H(+). Its function is as follows. Specifically methylates the pseudouridine at position 1915 (m3Psi1915) in 23S rRNA. This chain is Ribosomal RNA large subunit methyltransferase H, found in Haemophilus influenzae (strain PittGG).